Consider the following 249-residue polypeptide: tRNA pseudouridine synthase A (249 aa).

Aspartate 52 serves as the catalytic Nucleophile. Tyrosine 111 is a binding site for substrate.

It belongs to the tRNA pseudouridine synthase TruA family. As to quaternary structure, homodimer.

The catalysed reaction is uridine(38/39/40) in tRNA = pseudouridine(38/39/40) in tRNA. Its function is as follows. Formation of pseudouridine at positions 38, 39 and 40 in the anticodon stem and loop of transfer RNAs. The sequence is that of tRNA pseudouridine synthase A from Maricaulis maris (strain MCS10) (Caulobacter maris).